We begin with the raw amino-acid sequence, 359 residues long: 3-dehydroquinate synthase (359 aa).

NAD(+)-binding positions include 69 to 74 (DAEDGK), 103 to 107 (GAVTD), 127 to 128 (TT), K140, and K149. Residues E182, H244, and H260 each contribute to the Zn(2+) site.

Belongs to the sugar phosphate cyclases superfamily. Dehydroquinate synthase family. The cofactor is NAD(+). Requires Co(2+) as cofactor. It depends on Zn(2+) as a cofactor.

It is found in the cytoplasm. It carries out the reaction 7-phospho-2-dehydro-3-deoxy-D-arabino-heptonate = 3-dehydroquinate + phosphate. It functions in the pathway metabolic intermediate biosynthesis; chorismate biosynthesis; chorismate from D-erythrose 4-phosphate and phosphoenolpyruvate: step 2/7. Its function is as follows. Catalyzes the conversion of 3-deoxy-D-arabino-heptulosonate 7-phosphate (DAHP) to dehydroquinate (DHQ). In Corynebacterium pseudotuberculosis (strain C231), this protein is 3-dehydroquinate synthase.